A 252-amino-acid chain; its full sequence is SPbeta prophage-derived uncharacterized protein YomH (252 aa).

In Bacillus subtilis (strain 168), this protein is SPbeta prophage-derived uncharacterized protein YomH (yomH).